We begin with the raw amino-acid sequence, 344 residues long: Methionine import ATP-binding protein MetN (344 aa).

The 240-residue stretch at 2–241 (IELQGLSQRF…PQHEVTRAMI (240 aa)) folds into the ABC transporter domain. 38 to 45 (GRSGAGKS) lines the ATP pocket.

Belongs to the ABC transporter superfamily. Methionine importer (TC 3.A.1.24) family. As to quaternary structure, the complex is composed of two ATP-binding proteins (MetN), two transmembrane proteins (MetI) and a solute-binding protein (MetQ).

Its subcellular location is the cell inner membrane. It carries out the reaction L-methionine(out) + ATP + H2O = L-methionine(in) + ADP + phosphate + H(+). The catalysed reaction is D-methionine(out) + ATP + H2O = D-methionine(in) + ADP + phosphate + H(+). In terms of biological role, part of the ABC transporter complex MetNIQ involved in methionine import. Responsible for energy coupling to the transport system. In Cupriavidus pinatubonensis (strain JMP 134 / LMG 1197) (Cupriavidus necator (strain JMP 134)), this protein is Methionine import ATP-binding protein MetN.